Here is a 33-residue protein sequence, read N- to C-terminus: Pardaxin P-5 (33 aa).

Belongs to the pardaxin family. In terms of assembly, monomer. In aqueous solution exists as a tetramer.

The protein localises to the secreted. It localises to the target cell membrane. Functionally, exhibits unusual shark repellent and surfactant properties. Forms voltage-dependent, ion-permeable channels in membranes. At high concentration causes cell membrane lysis. This chain is Pardaxin P-5, found in Pardachirus marmoratus (Finless sole).